Here is a 200-residue protein sequence, read N- to C-terminus: ATP synthase subunit s, mitochondrial (200 aa).

A mitochondrion-targeting transit peptide spans 1 to 25; that stretch reads MMMFGKISRQLFSLKKIPWSCDSRY. Positions 1–61 are N-terminal domain; it reads MMMFGKISRQ…SEWLLRCGAK (61 aa). Gly59 is a binding site for Mg(2+). 4 LRR repeats span residues 62–87, 88–116, 117–141, and 142–173; these read VRYCGHQKWLQDYNKLPGGSVDRYKI, QAIDATDSCIMDIGFDHLVGLEHVERITL, CRCHYIEDNCLQRLSQLENLRKSLL, and ELEIIACGNVTDNGVIALRHFKNLKYLFLSDL. Residue Thr93 coordinates Mg(2+).

This sequence belongs to the ATP synthase subunit s family. As to quaternary structure, homotetramer. Associates with ATP synthase.

Its subcellular location is the mitochondrion. The protein resides in the mitochondrion inner membrane. Functionally, involved in regulation of mitochondrial membrane ATP synthase. Necessary for H(+) conduction of ATP synthase. Facilitates energy-driven catalysis of ATP synthesis by blocking a proton leak through an alternative proton exit pathway. In Rattus norvegicus (Rat), this protein is ATP synthase subunit s, mitochondrial.